Consider the following 243-residue polypeptide: Phosphoribosyl isomerase A (243 aa).

The active-site Proton acceptor is Asp-10. Residue Asp-129 is the Proton donor of the active site.

It belongs to the HisA/HisF family.

It localises to the cytoplasm. The enzyme catalyses 1-(5-phospho-beta-D-ribosyl)-5-[(5-phospho-beta-D-ribosylamino)methylideneamino]imidazole-4-carboxamide = 5-[(5-phospho-1-deoxy-D-ribulos-1-ylimino)methylamino]-1-(5-phospho-beta-D-ribosyl)imidazole-4-carboxamide. It carries out the reaction N-(5-phospho-beta-D-ribosyl)anthranilate = 1-(2-carboxyphenylamino)-1-deoxy-D-ribulose 5-phosphate. Its pathway is amino-acid biosynthesis; L-histidine biosynthesis; L-histidine from 5-phospho-alpha-D-ribose 1-diphosphate: step 4/9. It functions in the pathway amino-acid biosynthesis; L-tryptophan biosynthesis; L-tryptophan from chorismate: step 3/5. Functionally, involved in both the histidine and tryptophan biosynthetic pathways. This chain is Phosphoribosyl isomerase A, found in Mycobacteroides abscessus (strain ATCC 19977 / DSM 44196 / CCUG 20993 / CIP 104536 / JCM 13569 / NCTC 13031 / TMC 1543 / L948) (Mycobacterium abscessus).